A 469-amino-acid chain; its full sequence is Mitochondrial adenyl nucleotide antiporter SLC25A25 (469 aa).

A regulatory N-terminal domain region spans residues 1–165; the sequence is MLCLCLYVPI…LYWKHSTIFD (165 aa). The Mitochondrial intermembrane segment spans residues 1–189; that stretch reads MLCLCLYVPI…ERQTGMWWRH (189 aa). EF-hand domains are found at residues 47–80, 78–113, and 114–149; these read TYRQ…QDHE, DHEK…LGVK, and ISEQ…HPVE. Ca(2+)-binding residues include Asp-60, Asp-62, Asp-64, Gln-66, and Glu-71. Residues 151-160 form a linker region region; sequence IPEIILYWKH. The tract at residues 166 to 469 is C-terminal transmembrane transporter domain; that stretch reads VGENLTVPDE…LKITLGVQSR (304 aa). 3 Solcar repeats span residues 184–270, 278–363, and 375–463; these read GMWW…MKRL, LRIH…LKNT, and PGVF…LKIT. A helical membrane pass occupies residues 190–207; sequence LVAGGGAGAVSRTCTAPL. The Mitochondrial matrix segment spans residues 208 to 244; that stretch reads DRLKVLMQVHASRSNNMCIVGGFTQMIREGGAKSLWR. The chain crosses the membrane as a helical span at residues 245–264; sequence GNGINVLKIAPESAIKFMAY. Residues 265–287 lie on the Mitochondrial intermembrane side of the membrane; it reads EQMKRLVGSDQETLRIHERLVAG. The chain crosses the membrane as a helical span at residues 288-301; that stretch reads SLAGAIAQSSIYPM. Topologically, residues 302-337 are mitochondrial matrix; sequence EVLKTRMALRKTGQYSGMLDCARRILAKEGVAAFYK. The helical transmembrane segment at 338–357 threads the bilayer; that stretch reads GYIPNMLGIIPYAGIDLAVY. Residues 358 to 380 lie on the Mitochondrial intermembrane side of the membrane; it reads ETLKNTWLQRYAVNSADPGVFVL. Residues 381 to 398 form a helical membrane-spanning segment; the sequence is LACGTISSTCGQLASYPL. Over 399–437 the chain is Mitochondrial matrix; it reads ALVRTRMQAQASIEGAPEVTMSSLFKQILRTEGAFGLYR. Residues 438–457 traverse the membrane as a helical segment; sequence GLAPNFMKVIPAVSISYVVY. The Mitochondrial intermembrane portion of the chain corresponds to 458-469; sequence ENLKITLGVQSR.

It belongs to the mitochondrial carrier (TC 2.A.29) family.

It is found in the mitochondrion inner membrane. The catalysed reaction is Mg(2+)(out) + phosphate(in) + ATP(out) = Mg(2+)(in) + phosphate(out) + ATP(in). Activated by an increase in cytosolic calcium levels that induce a conformational change of the N-terminal regulatory domain, uncapping the channel and allowing transport. Electroneutral antiporter that most probably mediates the transport of adenyl nucleotides through the inner mitochondrial membrane. Originally identified as an ATP-magnesium/inorganic phosphate antiporter, it could have a broader specificity for adenyl nucleotides. By regulating the mitochondrial matrix adenyl nucleotide pool could adapt to changing cellular energetic demands and indirectly regulate adenyl nucleotide-dependent metabolic pathways. The sequence is that of Mitochondrial adenyl nucleotide antiporter SLC25A25 from Mus musculus (Mouse).